A 706-amino-acid chain; its full sequence is Elongation factor G 1 (706 aa).

The tr-type G domain maps to N8–T290. GTP is bound by residues A17–T24, D88–H92, and N142–D145.

Belongs to the TRAFAC class translation factor GTPase superfamily. Classic translation factor GTPase family. EF-G/EF-2 subfamily.

The protein localises to the cytoplasm. In terms of biological role, catalyzes the GTP-dependent ribosomal translocation step during translation elongation. During this step, the ribosome changes from the pre-translocational (PRE) to the post-translocational (POST) state as the newly formed A-site-bound peptidyl-tRNA and P-site-bound deacylated tRNA move to the P and E sites, respectively. Catalyzes the coordinated movement of the two tRNA molecules, the mRNA and conformational changes in the ribosome. In Pseudomonas aeruginosa (strain ATCC 15692 / DSM 22644 / CIP 104116 / JCM 14847 / LMG 12228 / 1C / PRS 101 / PAO1), this protein is Elongation factor G 1.